The following is a 357-amino-acid chain: UPF0283 membrane protein BAbS19_I09770 (357 aa).

The interval 1-36 is disordered; it reads MSDKTPRKPTAFRLEQPARVSAASEQEEPRRPRAVK. The segment covering 27–36 has biased composition (basic and acidic residues); sequence EEPRRPRAVK. Helical transmembrane passes span 78–98 and 109–129; these read ILFG…TEDL and LGWT…AIIL.

This sequence belongs to the UPF0283 family.

It localises to the cell inner membrane. The protein is UPF0283 membrane protein BAbS19_I09770 of Brucella abortus (strain S19).